A 259-amino-acid polypeptide reads, in one-letter code: Leucine-rich repeat-containing protein 3B (259 aa).

An N-terminal signal peptide occupies residues 1–33; that stretch reads MNLVDLWLTRSLSMCLLLQSFVLMILCFHSASM. Positions 34–64 constitute an LRRNT domain; that stretch reads CPKGCLCSSSGGLNVTCSNANLKEIPRDLPP. N-linked (GlcNAc...) asparagine glycosylation occurs at N47. 3 LRR repeats span residues 65-86, 89-110, and 114-135; these read ETVL…IFKD, QLRV…AFKG, and TLQT…AFNN. N-linked (GlcNAc...) asparagine glycosylation occurs at N94. The LRRCT domain maps to 145–197; sequence NPWHCDCTLQQVLRSMASNHETAHNVICKTSVLDEHAGRPFLNAANDADLCNL. A helical membrane pass occupies residues 205 to 225; sequence AMLVTMFGWFTMVISYVVYYV.

The protein belongs to the LRRC3 family.

It localises to the membrane. This is Leucine-rich repeat-containing protein 3B (LRRC3B) from Homo sapiens (Human).